The primary structure comprises 126 residues: Cystatin-C (126 aa).

The signal sequence occupies residues 1 to 18; it reads MKMLVFPVLAALFAVGLG. The Cystatin domain maps to 22 to 115; that stretch reads GAPRDINISE…CTFSVWSRPW (94 aa). The Secondary area of contact signature appears at 64–68; the sequence is QVVSG. 2 cysteine pairs are disulfide-bonded: Cys-82–Cys-92 and Cys-106–Cys-126.

The protein belongs to the cystatin family. Ubiquitously expressed in normal tissues including brain, eye, gill, heart, gullet, liver, spleen, stomach, pyloric ceca, intestine, kidney and muscle. Expressed, but not up-regulated, in lipopolysaccharide (LPS)-stimulated tissues including kidney, spleen, muscle and gill.

The protein resides in the secreted. Its function is as follows. Thiol protease inhibitor. Has high papain inhibitory activity and inhibits to a lesser extent fish cathepsins L, S, K, F, X and bovine cathepsin B in vitro. The protein is Cystatin-C of Paralichthys olivaceus (Bastard halibut).